We begin with the raw amino-acid sequence, 386 residues long: Homoserine O-succinyltransferase (386 aa).

Residues Asn-49–Leu-358 enclose the AB hydrolase-1 domain. Ser-156 (nucleophile) is an active-site residue. Arg-226 is a binding site for substrate. Residues Asp-321 and His-354 contribute to the active site. Substrate is bound at residue Asp-355.

The protein belongs to the AB hydrolase superfamily. MetX family. Homodimer.

It localises to the cytoplasm. It catalyses the reaction L-homoserine + succinyl-CoA = O-succinyl-L-homoserine + CoA. The protein operates within amino-acid biosynthesis; L-methionine biosynthesis via de novo pathway; O-succinyl-L-homoserine from L-homoserine: step 1/1. In terms of biological role, transfers a succinyl group from succinyl-CoA to L-homoserine, forming succinyl-L-homoserine. The polypeptide is Homoserine O-succinyltransferase (Acinetobacter baumannii (strain ACICU)).